A 525-amino-acid chain; its full sequence is GMP synthase [glutamine-hydrolyzing] (525 aa).

One can recognise a Glutamine amidotransferase type-1 domain in the interval 9 to 207 (RILILDFGSQ…VRDICQCEAL (199 aa)). The active-site Nucleophile is C86. Catalysis depends on residues H181 and E183. One can recognise a GMPS ATP-PPase domain in the interval 208-400 (WTPAKIIDDA…LGLPYDMLYR (193 aa)). 235-241 (SGGVDSS) is an ATP binding site.

In terms of assembly, homodimer.

It catalyses the reaction XMP + L-glutamine + ATP + H2O = GMP + L-glutamate + AMP + diphosphate + 2 H(+). The protein operates within purine metabolism; GMP biosynthesis; GMP from XMP (L-Gln route): step 1/1. Catalyzes the synthesis of GMP from XMP. The sequence is that of GMP synthase [glutamine-hydrolyzing] from Klebsiella pneumoniae (strain 342).